Here is an 83-residue protein sequence, read N- to C-terminus: uncharacterized protein (83 aa).

The segment at 15 to 36 (RLKNGRGNKTMSESDYNTSDSG) is disordered. Residues 21–35 (GNKTMSESDYNTSDS) are compositionally biased toward polar residues.

This is an uncharacterized protein from Aedes vexans (Inland floodwater mosquito).